The primary structure comprises 386 residues: Cytochrome b (386 aa).

The next 4 helical transmembrane spans lie at 39–59, 83–104, 119–139, and 184–204; these read FGSLLGLCLVIQLITGIFLAM, FMLKYIHANGASLFFLCVYIHM, WNIGVIIYLVMMLTAFLGYVL, and FFSLHYLFPFLIAGLGVLHIL. 2 residues coordinate heme b: H89 and H103. 2 residues coordinate heme b: H188 and H202. H207 serves as a coordination point for a ubiquinone. Transmembrane regions (helical) follow at residues 232-252, 294-314, 326-346, and 353-374; these read YKDLFGIMVLSSILVILCYFM, LGGVLAMVFSILVLLLLPFIH, LGKIAFWFLVADFILLTWLGA, and YIMIGQFASLFYFCYFLVLVPL.

Belongs to the cytochrome b family. In terms of assembly, the main subunits of complex b-c1 are: cytochrome b, cytochrome c1 and the Rieske protein. Heme b is required as a cofactor.

The protein resides in the mitochondrion inner membrane. In terms of biological role, component of the ubiquinol-cytochrome c reductase complex (complex III or cytochrome b-c1 complex) that is part of the mitochondrial respiratory chain. The b-c1 complex mediates electron transfer from ubiquinol to cytochrome c. Contributes to the generation of a proton gradient across the mitochondrial membrane that is then used for ATP synthesis. The chain is Cytochrome b (MT-CYB) from Sarcophyton glaucum (Toadstool umbrella leather coral).